The sequence spans 1369 residues: Serine/threonine-protein kinase SIK3 (1369 aa).

Positions 26–55 (LLPPPAAGPPAAPAAVPPAAVPARPTAPAS) are disordered. Pro residues predominate over residues 27-45 (LPPPAAGPPAAPAAVPPAA). Positions 46–55 (VPARPTAPAS) are enriched in low complexity. Residues 66-317 (YEIDRTIGKG…MEQICRHKWM (252 aa)) form the Protein kinase domain. The residue at position 71 (Thr71) is a Phosphothreonine. ATP-binding positions include 72–80 (IGKGNFAVV) and Lys95. The Proton acceptor role is filled by Asp188. Residue Thr221 is modified to Phosphothreonine. A UBA domain is found at 344-384 (PLNDDVLLAMEDMGLDKERTLQSLRSDAYDHYSAIYSLLCD). Thr469 bears the Phosphothreonine mark. Residues Ser551, Ser591, Ser592, Ser674, and Ser695 each carry the phosphoserine modification. The interval 775–821 (IQPSSPPPNHPSNHLFRQPSNSPPPVSSAMITSHGATSPSQFQGLPS) is disordered. Polar residues predominate over residues 803–818 (AMITSHGATSPSQFQG). At Ser914 the chain carries Phosphoserine. The interval 942 to 993 (LFSDQSRGSPSSYSPSTGVGFPPTQALKVPPLDQFPTFPPSAQQQPPHYTTS) is disordered. The segment covering 944–957 (SDQSRGSPSSYSPS) has biased composition (low complexity). Positions 981-993 (PSAQQQPPHYTTS) are enriched in polar residues. Position 1026 is a phosphoserine (Ser1026). Arg1034 carries the post-translational modification Omega-N-methylarginine. Positions 1314 to 1338 (DEEDEECGVSLGHEHPGLGDGSQHL) are disordered.

It belongs to the protein kinase superfamily. CAMK Ser/Thr protein kinase family. SNF1 subfamily. In terms of assembly, binds to and is activated by YWHAZ when phosphorylated on Thr-221. Interacts with 14-3-3 proteins. Interacts with HDAC4; this interaction leads to HDAC4 retention in the cytoplasm. Interacts with DEPTOR, MLST8/GbetaL, RICTOR and RPTOR. The cofactor is Mg(2+). In terms of processing, phosphorylated at Thr-221 by STK11/LKB1 in complex with STE20-related adapter-alpha (STRADA) pseudo kinase and CAB39. Expressed in hypertrophic chondrocytes in the growth plate.

It is found in the cytoplasm. The catalysed reaction is L-seryl-[protein] + ATP = O-phospho-L-seryl-[protein] + ADP + H(+). It carries out the reaction L-threonyl-[protein] + ATP = O-phospho-L-threonyl-[protein] + ADP + H(+). Activated by phosphorylation on Thr-221. In terms of biological role, positive regulator of mTOR signaling that functions by triggering the degradation of DEPTOR, an mTOR inhibitor. Required for chondrocyte hypertrophy during skeletogenesis. Negatively regulates cAMP signaling pathway possibly by acting on CRTC2/TORC2 and CRTC3/TORC3. Prevents HDAC4 translocation to the nucleus. This is Serine/threonine-protein kinase SIK3 (Sik3) from Mus musculus (Mouse).